A 398-amino-acid chain; its full sequence is Minor cardiolipin synthase ClsB (398 aa).

A helical transmembrane segment spans residues 3-23; the sequence is VFIVIMIIVVIFFALILLDIF. PLD phosphodiesterase domains lie at 141–168 and 311–338; these read MQKR…AEEY and YQGF…DKRS.

This sequence belongs to the phospholipase D family. Cardiolipin synthase subfamily.

It is found in the cell membrane. In terms of biological role, involved in the biosynthesis of cardiolipin. This is Minor cardiolipin synthase ClsB (clsB) from Bacillus subtilis (strain 168).